Consider the following 107-residue polypeptide: SOSS complex subunit C (107 aa).

Belongs to the SOSS-C family. As to quaternary structure, belongs to the multiprotein complex Integrator. Component of the SOSS complex, composed of soss-b (soss-b1/nabp2 or soss-b2/nabp1), soss-a/ints3 and soss-c/inip.

The protein resides in the nucleus. Functionally, component of the SOSS complex, a multiprotein complex that functions downstream of the MRN complex to promote DNA repair and G2/M checkpoint. The SOSS complex associates with single-stranded DNA at DNA lesions and influences diverse endpoints in the cellular DNA damage response including cell-cycle checkpoint activation, recombinational repair and maintenance of genomic stability. Required for efficient homologous recombination-dependent repair of double-strand breaks (DSBs). This Salmo salar (Atlantic salmon) protein is SOSS complex subunit C (inip).